An 858-amino-acid polypeptide reads, in one-letter code: Leucine--tRNA ligase (858 aa).

The 'HIGH' region motif lies at 42–52 (PYPSGRLHMGH). Residues 618-622 (KMSKS) carry the 'KMSKS' region motif. ATP is bound at residue Lys-621.

Belongs to the class-I aminoacyl-tRNA synthetase family.

The protein resides in the cytoplasm. It carries out the reaction tRNA(Leu) + L-leucine + ATP = L-leucyl-tRNA(Leu) + AMP + diphosphate. This is Leucine--tRNA ligase from Vibrio cholerae serotype O1 (strain ATCC 39541 / Classical Ogawa 395 / O395).